Reading from the N-terminus, the 620-residue chain is Probable protein arginine N-methyltransferase 3 (620 aa).

Over residues 1 to 17 the composition is skewed to basic and acidic residues; it reads MATREHELRPEQERLGE. The interval 1–45 is disordered; it reads MATREHELRPEQERLGEDREEYEDGEEEEEEEEEEEGWDDWESDG. Over residues 18-45 the composition is skewed to acidic residues; it reads DREEYEDGEEEEEEEEEEEGWDDWESDG. The C2H2-type 1 zinc finger occupies 55 to 78; sequence LLCLFCSARFDSESSLFSHCASEH. Residues 110 to 137 form a C2H2-type 2; degenerate zinc finger; that stretch reads NKCWSCGQVFSSNSELCGHLHALEIPQL. The SAM-dependent MTase PRMT-type domain occupies 253–582; the sequence is DESYFGSYSS…DECPAVMIRS (330 aa). The S-adenosyl-L-homocysteine site is built by Arg275, Gly299, Asp321, Ser323, and Glu364. Active-site residues include Glu383 and Glu392.

The protein belongs to the class I-like SAM-binding methyltransferase superfamily. Protein arginine N-methyltransferase family.

It localises to the cytoplasm. The protein localises to the cytosol. It carries out the reaction L-arginyl-[protein] + S-adenosyl-L-methionine = N(omega)-methyl-L-arginyl-[protein] + S-adenosyl-L-homocysteine + H(+). The enzyme catalyses L-arginyl-[protein] + 2 S-adenosyl-L-methionine = N(omega),N(omega)-dimethyl-L-arginyl-[protein] + 2 S-adenosyl-L-homocysteine + 2 H(+). In terms of biological role, protein-arginine N-methyltransferase that catalyzes both the monomethylation and asymmetric dimethylation of the guanidino nitrogens of arginine residues in target proteins, and therefore falls into the group of type I methyltransferases. The sequence is that of Probable protein arginine N-methyltransferase 3 (PRMT3) from Oryza sativa subsp. indica (Rice).